The primary structure comprises 391 residues: Nucleosome assembly protein 1-like 1 (391 aa).

Met1 is modified (N-acetylmethionine). Over residues 1-10 (MADIDNKEQS) the composition is skewed to basic and acidic residues. Residues 1 to 32 (MADIDNKEQSELDQDLDDVEEVEEEETGEETK) are disordered. Ala2 carries the N-acetylalanine modification. Ser10 is modified (phosphoserine). A compositionally biased stretch (acidic residues) spans 11–28 (ELDQDLDDVEEVEEEETG). Thr62 and Thr64 each carry phosphothreonine. Ser69 is modified (phosphoserine). An N6-acetyllysine modification is found at Lys116. The NAP1L motif motif lies at 125-150 (YEPTEEECEWKPDEEDEISEELKEKA). A compositionally biased stretch (acidic residues) spans 132 to 143 (CEWKPDEEDEIS). Residues 132–163 (CEWKPDEEDEISEELKEKAKIEDEKKDEEKED) form a disordered region. Ser143 is modified (phosphoserine). Residues 144-163 (EELKEKAKIEDEKKDEEKED) are compositionally biased toward basic and acidic residues. The short motif at 273-279 (IKKKQKH) is the Nuclear localization signal element. Residues 346–376 (AIEDDDDDYDEEGEEADEEGEEEGDEENDPD) are compositionally biased toward acidic residues. Residues 346–391 (AIEDDDDDYDEEGEEADEEGEEEGDEENDPDYDPKKDQNPAECKQQ) are disordered. Residues 377–391 (YDPKKDQNPAECKQQ) are compositionally biased toward basic and acidic residues. Cysteine methyl ester is present on Cys388. Cys388 carries S-farnesyl cysteine lipidation. A propeptide spans 389-391 (KQQ) (removed in mature form).

This sequence belongs to the nucleosome assembly protein (NAP) family. As to quaternary structure, homodimer. The dimer binds strongly and sequentially to single and double H2A-H2B heterodimers. Interacts with ERCC6; this interaction increases ERCC6 processivity. Interacts with RAD54. Interacts with SETD1A. (Microbial infection) Interacts with human herpesvirus 8 protein LANA1 (via N-terminus); this interaction is required for LANA1-dependent DNA replication. In terms of assembly, (Microbial infection) Interacts with hepatitis virus protein NS5A (via C-terminus); this interaction sequesters NAP1L1 in the cytoplasm, blocking its nuclear translocation. As to quaternary structure, (Microbial infection) Interacts with Chikungunya virus non-structural protein 3 (via C-terminus). Post-translationally, monoglycylated on glutamate residues. Cannot be polyglycylated due to the absence of functional TTLL10 in human. Polyglutamylated by TTLL4 on glutamate residues, resulting in polyglutamate chains on the gamma-carboxyl group. Both polyglutamylation and monoglycylation modifications can coexist on the same protein on adjacent residues, and lowering polyglycylation levels increases polyglutamylation, and reciprocally. As to expression, ubiquitously expressed.

The protein resides in the nucleus. Its subcellular location is the melanosome. It is found in the cytoplasm. Histone chaperone that plays a role in the nuclear import of H2A-H2B and nucleosome assembly. Also participates in several important DNA repair mechanisms: greatly enhances ERCC6-mediated chromatin remodeling which is essential for transcription-coupled nucleotide excision DNA repair. Also stimulates homologous recombination (HR) by RAD51 and RAD54 which is essential in mitotic DNA double strand break (DSB) repair. Plays a key role in the regulation of embryonic neurogenesis. Promotes the proliferation of neural progenitors and inhibits neuronal differentiation during cortical development. Regulates neurogenesis via the modulation of RASSF10; regulates RASSF10 expression by promoting SETD1A-mediated H3K4 methylation at the RASSF10 promoter. Functionally, (Microbial infection) Positively regulates Epstein-Barr virus reactivation in epithelial cells through the induction of viral BZLF1 expression. Its function is as follows. (Microbial infection) Together with human herpesvirus 8 protein LANA1, assists the proper assembly of the nucleosome on the replicated viral DNA. The protein is Nucleosome assembly protein 1-like 1 (NAP1L1) of Homo sapiens (Human).